Here is a 1477-residue protein sequence, read N- to C-terminus: Neurexin-1 (1477 aa).

A signal peptide spans 1 to 30 (MGTALLQRGGCFLLCLSLLLLGCWAELGSG). A Laminin G-like 1 domain is found at 31-217 (LEFPGAEGQW…PPNSGGGSPC (187 aa)). Residues 31 to 1401 (LEFPGAEGQW…EVIRESSSTT (1371 aa)) lie on the Extracellular side of the membrane. Residues Asn-125 and Asn-190 are each glycosylated (N-linked (GlcNAc...) asparagine). Positions 198–221 (DSGEVKLDDEPPNSGGGSPCEAGE) are disordered. Residues 213–256 (GGSPCEAGEEGEGGVCLNGGVCSVVDDQAVCDCSRTGFRGKDCS) form the EGF-like 1 domain. Intrachain disulfides connect Cys-228–Cys-243 and Cys-245–Cys-255. Laminin G-like domains lie at 283-473 (IATF…AFKC) and 480-672 (DPIT…KPSC). Residues Asp-329, Leu-346, and Met-407 each coordinate Ca(2+). 5 disulfides stabilise this stretch: Cys-437/Cys-473, Cys-643/Cys-672, Cys-680/Cys-691, Cys-685/Cys-700, and Cys-702/Cys-712. In terms of domain architecture, EGF-like 2 spans 676-713 (TAKPCLSNPCKNNGMCRDGWNRYVCDCSGTGYLGRSCE). 2 consecutive Laminin G-like domains span residues 718 to 891 (VLSY…IDYC) and 905 to 1080 (DPVT…ERGC). Ca(2+) contacts are provided by Asp-765 and Leu-782. A glycan (N-linked (GlcNAc...) asparagine) is linked at Asn-790. Arg-841 contributes to the Ca(2+) binding site. 5 disulfide bridges follow: Cys-883–Cys-891, Cys-1052–Cys-1080, Cys-1087–Cys-1098, Cys-1092–Cys-1107, and Cys-1109–Cys-1119. The EGF-like 3 domain occupies 1083-1120 (PSTTCQEDSCSNQGVCLQQWDGFSCDCSMTSFSGPLCN). The Laminin G-like 6 domain maps to 1126–1294 (YIFSKGGGQI…DANIAIVGNV (169 aa)). Asp-1176 and Val-1193 together coordinate Ca(2+). N-linked (GlcNAc...) asparagine glycosylation occurs at Asn-1223. Residues Ile-1245 and Asn-1247 each coordinate Ca(2+). Residues 1325-1390 (TTTLATSTAR…AGGREPYPGS (66 aa)) are disordered. Ser-1355 is a glycosylation site (O-linked (Xyl...) (heparan sulfate) serine). A helical transmembrane segment spans residues 1402–1422 (GMVVGIVAAAALCILILLYAM). Topologically, residues 1423–1477 (YKYRNRDEGSYHVDESRNYISNSAQSNGAVVKEKQPSSAKSSNKNKKNKDKEYYV) are cytoplasmic. The interaction with CASK stretch occupies residues 1444–1470 (NSAQSNGAVVKEKQPSSAKSSNKNKKN). The tract at residues 1444–1477 (NSAQSNGAVVKEKQPSSAKSSNKNKKNKDKEYYV) is disordered.

This sequence belongs to the neurexin family. As to quaternary structure, interacts (via laminin G-like domain 2 and/or laminin G-like domain 6) with NLGN1 forming a heterotetramer, where one NLGN1 dimer interacts with one NRXN1 dimer. Also interacts (via laminin G-like domain 2 and/or laminin G-like domain 6) with NLGN2, NLGN3 and NLGN4L; interactions with NLGN1, NLGN2, NLGN3 and NLGN4L are calcium-dependent. Interacts (via cytoplasmic C-terminal region) with CASK (via the PDZ, SH3 and guanylate kinase-like domains). Interacts (via cytoplasmic C-terminus) with CASKIN1 and APBA1. Interacts (via laminin G-like domain 2) with NXPH1 and NXPH3. Alpha-type isoforms (neurexin-1-alpha) interact (via laminin G-like domain 2 and/or laminin G-like domain 6) with DAG1 (via alpha-dystroglycan chain). Interacts with LRRTM1, LRRTM2, LRRTM3 and LRRTM4. Interacts with SYT13 and SYTL1. Interacts with CBLN1, CBLN2 and, less avidly, with CBLN4. Interacts with CLSTN3. In terms of processing, O-glycosylated; contains heparan sulfate. Heparan sulfate attachment is required for synapse development by mediating interactions with neuroligins and LRRTM2. As to expression, brain.

The protein localises to the presynaptic cell membrane. In terms of biological role, cell surface protein involved in cell-cell-interactions, exocytosis of secretory granules and regulation of signal transmission. Function is isoform-specific. Alpha-type isoforms have a long N-terminus with six laminin G-like domains and play an important role in synaptic signal transmission. Alpha-type isoforms play a role in the regulation of calcium channel activity and Ca(2+)-triggered neurotransmitter release at synapses and at neuromuscular junctions. They play an important role in Ca(2+)-triggered exocytosis of secretory granules in pituitary gland. They may affect their functions at synapses and in endocrine cells via their interactions with proteins from the exocytotic machinery. Likewise, alpha-type isoforms play a role in regulating the activity of postsynaptic NMDA receptors, a subtype of glutamate-gated ion channels. Both alpha-type and beta-type isoforms may play a role in the formation or maintenance of synaptic junctions via their interactions (via the extracellular domains) with neuroligin family members, CBLN1 or CBLN2. In vitro, triggers the de novo formation of presynaptic structures. May be involved in specification of excitatory synapses. Alpha-type isoforms were first identified as receptors for alpha-latrotoxin from spider venom. The polypeptide is Neurexin-1 (NRXN1) (Homo sapiens (Human)).